The sequence spans 976 residues: LRR receptor-like serine/threonine-protein kinase ERECTA (976 aa).

The signal sequence occupies residues Met-1–Ser-24. At Glu-25 to Arg-580 the chain is on the extracellular side. N-linked (GlcNAc...) asparagine glycosylation is found at Asn-65 and Asn-74. 20 LRR repeats span residues Asn-69–Lys-92, Ser-93–Cys-115, Ser-117–Lys-140, Gln-141–Ile-163, Asn-165–Asn-187, Val-189–Thr-212, Gly-213–Cys-235, Ala-237–Leu-259, Gln-260–Met-282, Ala-284–Leu-306, Phe-308–Met-330, Lys-332–Thr-355, Asp-356–Thr-379, Asn-380–Lys-401, Ser-404–Arg-425, Asn-428–Asp-449, His-452–Asn-473, Ser-476–Leu-498, Asn-500–Leu-522, and Ser-523–Ser-545. N-linked (GlcNAc...) asparagine glycosylation is found at Asn-221 and Asn-234. N-linked (GlcNAc...) asparagine glycosylation is found at Asn-305 and Asn-329. Residue Asn-409 is glycosylated (N-linked (GlcNAc...) asparagine). Asn-457 carries an N-linked (GlcNAc...) asparagine glycan. Asn-510, Asn-528, and Asn-543 each carry an N-linked (GlcNAc...) asparagine glycan. A helical membrane pass occupies residues Ala-581–Ala-601. At Cys-602–Glu-976 the chain is on the cytoplasmic side. Thr-645 carries the post-translational modification Phosphothreonine. Residues Leu-648 to Met-918 enclose the Protein kinase domain. ATP is bound by residues Ile-654–Val-662 and Lys-676. A phosphotyrosine mark is found at Tyr-721 and Tyr-760. The active-site Proton acceptor is Asp-773. Tyr-815 carries the phosphotyrosine modification. Thr-823 is subject to Phosphothreonine.

Belongs to the protein kinase superfamily. Ser/Thr protein kinase family. Homodimer and heterodimer with ERL1 and TMM. Interacts with EPF1, EPF2, EPFL4, EPFL5 and EPFL6. Interacts with SERK1, SERK2, SERK3/BAK1 and SERK4 in a EPF2-induced manner. Interacts with EPFL9/STOMAGEN. In terms of tissue distribution, mostly expressed in shoot apical meristems (SAM), organ primordia, flowers, siliques and young rosette leaves, and, to a lower extent, in stems and cauline leaves. Expressed in growing inflorescence stems and pedicels. Detected in epidermis, phloem and xylem.

Its subcellular location is the cell membrane. The catalysed reaction is L-seryl-[protein] + ATP = O-phospho-L-seryl-[protein] + ADP + H(+). It carries out the reaction L-threonyl-[protein] + ATP = O-phospho-L-threonyl-[protein] + ADP + H(+). Receptor kinase that, together with ERL1 and ERL2, regulates aerial architecture, including inflorescence (e.g. shoot apical meristem-originating organ shape, elongation of the internode and pedicels, and adaxial-abaxial polarity), and stomatal patterning (e.g. density and clustering), probably by tuning cell division and expansion. Redundantly involved with ERL1 in procambial development regulation. Forms a functional ligand-receptor pair with EPF2 (AC Q8LC53). Modulates plant transpiration efficiency by controlling stomatal density, leaf photosynthetic capacity, epidermal cell expansion, mesophyll cell proliferation and cell-cell contact. A phloem-specific expression of ER is sufficient for proper inflorescence architecture. Probable major trait regulating canalization (maintenance of phenotype despite varying environment) in many aspect of the plant physiology (e.g. plant morphology, light-dependent leaves number, branch number, flowering time, phytate and mineral concentrations) by transducing microenvironmental variation into phenotypic differentiation (ecological amplifier). May maintain development integrity in heat stress conditions. Regulates cell wall composition and structure. Confers resistance to the pathogenic bacteria Ralstonia solanacearum and to the necrotrophic fungi Plectosphaerella cucumerina and Pythium irregulare, and required for callose deposition upon infection. Resistance to P.cucumerina seems cell wall-mediated. Forms a constitutive complex with TMM involved in the recognition of the stomatal regulatory peptides EPF1, EPF2 and EPFL9/STOMAGEN. This chain is LRR receptor-like serine/threonine-protein kinase ERECTA, found in Arabidopsis thaliana (Mouse-ear cress).